Consider the following 75-residue polypeptide: Brevinin-2HS2A (75 aa).

A signal peptide spans 1–22 (MFTLKKPLLLLFFLGTISLSLC). Residues 23–40 (QEERDADEEEGEMIEEEV) constitute a propeptide that is removed on maturation. Cysteines 69 and 75 form a disulfide.

It belongs to the frog skin active peptide (FSAP) family. Brevinin subfamily. In terms of tissue distribution, expressed by the skin glands.

It is found in the secreted. Its function is as follows. Has antimicrobial activity against some Gram-positive bacteria and fungi but has no activity against a range of Gram-negative bacteria except P.faecalis. Has antimicrobial activity against the Gram-positive bacteria S.aureus ATCC 25923 (MIC=19 uM), B.licheniformis X39 (MIC=37.5 uM) and R.rhodochrous X15 (MIC=9.5 uM), is virtually inactive against E.faecium 091299 (MIC=150 uM) and S.carnosus KHS (MIC=150 uM) and inactive against E.faecalis 981. Active against the Gram-negative bacterium P.faecalis X29 (MIC=9.5 uM) and is inactive against E.coli, P.aeruginosa and S.typhi. Active against C.albicans ATCC 2002 (MIC=19 uM) and is also active against the slime mold 090223 (MIC=37.5 uM). Has extremely low hemolytic activity against human erythrocytes (LC(50)=300 uM). The polypeptide is Brevinin-2HS2A (Odorrana hainanensis (Odor frog)).